Reading from the N-terminus, the 382-residue chain is tRNA (guanine-N(7)-)-methyltransferase non-catalytic subunit wuho (382 aa).

The segment at 40–59 (VKDTDAGNEPNGNQTQPTPA) is disordered. The segment covering 49–59 (PNGNQTQPTPA) has biased composition (polar residues). 2 WD repeats span residues 149 to 190 (GHMS…ECFC) and 192 to 230 (GHTE…ELSK).

It belongs to the WD repeat TRM82 family. Forms a heterodimer with the catalytic subunit.

The protein resides in the nucleus. It participates in tRNA modification; N(7)-methylguanine-tRNA biosynthesis. In terms of biological role, required for the formation of N(7)-methylguanine at position 46 (m7G46) in tRNA. In the complex, it is required to stabilize and induce conformational changes of the catalytic subunit. This Anopheles gambiae (African malaria mosquito) protein is tRNA (guanine-N(7)-)-methyltransferase non-catalytic subunit wuho.